A 104-amino-acid polypeptide reads, in one-letter code: ATP-dependent Clp protease adapter protein ClpS (104 aa).

This sequence belongs to the ClpS family. As to quaternary structure, binds to the N-terminal domain of the chaperone ClpA.

Its function is as follows. Involved in the modulation of the specificity of the ClpAP-mediated ATP-dependent protein degradation. This chain is ATP-dependent Clp protease adapter protein ClpS, found in Neisseria gonorrhoeae (strain ATCC 700825 / FA 1090).